A 439-amino-acid polypeptide reads, in one-letter code: MSAAQGWDRNRRRGGGAAGGASGVSGAGAAGGGRGTGQLNRFVQLSGRPHLPGKKKIRWDPVRRRFIQSCPIIRIPNRFLRGHRPPPARSGHRCVADNTNLYVFGGYNPDYDESGGPDNEDYPLFRELWRYHFATGVWHQMGTDGYMPRELASMSLVLHGNNLLVFGGTGIPFGESNGNDVHVCNVKYKRWALLSCRGKRPSRIYGQAMALINGSLYVFGGTTGYIYSTDLHKLDLNTMVWTQLKPNNLSCDLPEERYRHEIAHDGQRIYILGGGTSWTAYSLNKIHAYNLETNAWEEIATKPHEKIGFPAARRCHSCVQIKNDVFICGGYNGEVILGDIWKLNLQTFQWVKLPATMPEPVYFHCAAVTPAGCMYIHGGVVNIHENKRTGSLFKIWLVVPSLLELAWEKLLAAFPNLANLSRTQLLHLGLTQELIERLK.

The interval 1–50 is disordered; it reads MSAAQGWDRNRRRGGGAAGGASGVSGAGAAGGGRGTGQLNRFVQLSGRPH. Arginine 13 carries the post-translational modification Omega-N-methylarginine. Gly residues predominate over residues 15-36; it reads GGAAGGASGVSGAGAAGGGRGT. 6 Kelch repeats span residues 87-154, 155-198, 199-260, 261-319, 320-364, and 365-403; these read PARS…LASM, SLVL…SCRG, KRPS…RYRH, EIAH…HSCV, QIKN…VYFH, and CAAV…PSLL. The interval 398–439 is interaction with CUL2; it reads VVPSLLELAWEKLLAAFPNLANLSRTQLLHLGLTQELIERLK.

This sequence belongs to the KLHDC10 family. Component of a CRL2 E3 ubiquitin-protein ligase complex, also named ECS (Elongin BC-CUL2/5-SOCS-box protein) complex, composed of CUL2, Elongin BC (ELOB and ELOC), RBX1 and substrate-specific adapter KLHDC10. Interacts (via the 6 Kelch repeats) with PPP5C.

The protein resides in the nucleus. The protein localises to the cytoplasm. It functions in the pathway protein modification; protein ubiquitination. Its function is as follows. Substrate-recognition component of a Cul2-RING (CRL2) E3 ubiquitin-protein ligase complex of the DesCEND (destruction via C-end degrons) pathway, which recognizes a C-degron located at the extreme C-terminus of target proteins, leading to their ubiquitination and degradation. The C-degron recognized by the DesCEND pathway is usually a motif of less than ten residues and can be present in full-length proteins, truncated proteins or proteolytically cleaved forms. The CRL2(KLHDC10) complex specifically recognizes proteins with a proline-glycine (Pro-Gly) or an alanine tail (CAT tail) at the C-terminus, leading to their ubiquitination and degradation. The CRL2(KLHDC10) complex is involved in the ribosome-associated quality control (RQC) pathway, which mediates the extraction of incompletely synthesized nascent chains from stalled ribosomes: CRL2(KLHDC10) acts downstream of NEMF and recognizes CAT tails associated with stalled nascent chains, leading to their ubiquitination and degradation. Participates in the oxidative stress-induced cell death through MAP3K5 activation. Inhibits PPP5C phosphatase activity on MAP3K5. Acts as a regulator of necroptosis. In Mus musculus (Mouse), this protein is Kelch domain-containing protein 10.